Here is a 714-residue protein sequence, read N- to C-terminus: G protein-coupled receptor kinase 2 (714 aa).

Residues 1 to 308 are N-terminal; sequence MELENIVANT…LEAQPITYKT (308 aa). RGS domains lie at 53–174 and 177–294; these read YGYV…SQHS and INHK…HRYL. Positions 141–229 are disordered; that stretch reads SNANPTETAE…GGGEGGGGGK (89 aa). Positions 154 to 175 are enriched in low complexity; it reads CNNTTANNCNNINNSNNSQHSS. Basic and acidic residues-rich tracts occupy residues 176–190 and 199–220; these read DINH…HNGD and HQDD…EKGG. The Protein kinase domain occupies 309-574; it reads FRMYRVLGKG…GQDVMAHPFF (266 aa). ATP-binding positions include 315 to 323 and K338; that span reads LGKGGFGEV. Residue D435 is the Proton acceptor of the active site. One can recognise an AGC-kinase C-terminal domain in the interval 577-642; that stretch reads TQLNWRRLEA…GSVSISWQNE (66 aa). Residue S612 is modified to Phosphoserine. Position 613 is a phosphothreonine (T613). The interval 667 to 714 is disordered; it reads INAAPEPDKAGCFPFRRKKKQPARTQPIPIPEHLLTTSHSVSSTTVES. Residues 698-714 show a composition bias toward low complexity; that stretch reads EHLLTTSHSVSSTTVES.

This sequence belongs to the protein kinase superfamily. AGC Ser/Thr protein kinase family. GPRK subfamily. As to expression, expressed in all larval tissues and in adult ovaries. Larval CNS staining is localized to axons projecting to the optic lobes and the mushroom bodies, in the longitudinal connectives, and in cell bodies and nerves of the ring gland corpus allatum. Adult CNS staining is detectable only in cell bodies and processes associated with the ellipsoid body of the central complex and portions of the mushroom bodies. In the wing disk, expression is confined to a stripe that parallels the anterior/posterior boundary of the wing blade and the hinge region, and weak expression in the prospective notum.

Its subcellular location is the membrane. It carries out the reaction [G-protein-coupled receptor] + ATP = [G-protein-coupled receptor]-phosphate + ADP + H(+). Its function is as follows. Specifically phosphorylates the activated forms of G protein-coupled receptors. Required during oogenesis and embryogenesis; component of a signaling pathway that functions during egg chamber maturation. The sequence is that of G protein-coupled receptor kinase 2 (Gprk2) from Drosophila melanogaster (Fruit fly).